Here is a 171-residue protein sequence, read N- to C-terminus: 3-hydroxydecanoyl-[acyl-carrier-protein] dehydratase (171 aa).

Histidine 70 is an active-site residue.

This sequence belongs to the thioester dehydratase family. FabA subfamily. As to quaternary structure, homodimer.

The protein localises to the cytoplasm. It carries out the reaction a (3R)-hydroxyacyl-[ACP] = a (2E)-enoyl-[ACP] + H2O. The catalysed reaction is (3R)-hydroxydecanoyl-[ACP] = (2E)-decenoyl-[ACP] + H2O. The enzyme catalyses (2E)-decenoyl-[ACP] = (3Z)-decenoyl-[ACP]. It participates in lipid metabolism; fatty acid biosynthesis. Functionally, necessary for the introduction of cis unsaturation into fatty acids. Catalyzes the dehydration of (3R)-3-hydroxydecanoyl-ACP to E-(2)-decenoyl-ACP and then its isomerization to Z-(3)-decenoyl-ACP. Can catalyze the dehydratase reaction for beta-hydroxyacyl-ACPs with saturated chain lengths up to 16:0, being most active on intermediate chain length. The protein is 3-hydroxydecanoyl-[acyl-carrier-protein] dehydratase of Shewanella halifaxensis (strain HAW-EB4).